Reading from the N-terminus, the 497-residue chain is MELVVKSVAAASVKTATLVIPVGENRKLGAVAKAVDQASEGAISAVLKRGDLAGKPGQTLLLQNLAGLKAERVLLVGSGKEEALGDRAWRKLVASVAGVLKGLNGADAVLALDDIAVSNRDAHYGKYRLLAETLLDGEYVFDRFKSQKAEPRALKKVTLLADKAGQAEVERAVKHASAIATGMAFTRDLGNLPPNLCHPSFLAEQAKDLGKAHKGLKVEVLDEKKIKDLGMGAFYAVGQGSDQPPRLIVLNYQGGKKADKPFVLVGKGITFDTGGISLKPGAGMDEMKYDMCGAASVFGTLRAVLELQLPINLVCLLACAENMPSGGATRPGDIVTTMSGQTVEILNTDAEGRLVLCDTLTYAERFKPQAVIDIATLTGACIVALGSHTSGLMGNNDDLVGQLLDAGKRADDRAWQLPLFDEYQEQLDSPFADMGNIGGPKAGTITAGCFLSRFAKAYNWAHMDIAGTAWVSGGKDKGATGRPVPLLTQYLLDRAGA.

Positions 267 and 272 each coordinate Mn(2+). Lys279 is a catalytic residue. Mn(2+)-binding residues include Asp290, Asp349, and Glu351. Residue Arg353 is part of the active site.

The protein belongs to the peptidase M17 family. Requires Mn(2+) as cofactor.

The protein localises to the cytoplasm. It carries out the reaction Release of an N-terminal amino acid, Xaa-|-Yaa-, in which Xaa is preferably Leu, but may be other amino acids including Pro although not Arg or Lys, and Yaa may be Pro. Amino acid amides and methyl esters are also readily hydrolyzed, but rates on arylamides are exceedingly low.. The enzyme catalyses Release of an N-terminal amino acid, preferentially leucine, but not glutamic or aspartic acids.. Its function is as follows. Presumably involved in the processing and regular turnover of intracellular proteins. Catalyzes the removal of unsubstituted N-terminal amino acids from various peptides. This Pseudomonas putida (strain GB-1) protein is Probable cytosol aminopeptidase.